The sequence spans 165 residues: Cytochrome c-type biogenesis protein CcmE (165 aa).

Residues 1–7 (MTRKQKR) are Cytoplasmic-facing. Residues 8–28 (LAIIGGGMSFIVAAVLLVMFA) traverse the membrane as a helical; Signal-anchor for type II membrane protein segment. At 29–165 (FGQSIAYFYM…ASGDKTGATK (137 aa)) the chain is on the periplasmic side. Residues histidine 123 and tyrosine 127 each coordinate heme. The disordered stretch occupies residues 138 to 165 (DKGLWQQGAEGAAPAASAASGDKTGATK). The segment covering 145 to 158 (GAEGAAPAASAASG) has biased composition (low complexity).

Belongs to the CcmE/CycJ family.

The protein resides in the cell inner membrane. Heme chaperone required for the biogenesis of c-type cytochromes. Transiently binds heme delivered by CcmC and transfers the heme to apo-cytochromes in a process facilitated by CcmF and CcmH. The polypeptide is Cytochrome c-type biogenesis protein CcmE (Agrobacterium fabrum (strain C58 / ATCC 33970) (Agrobacterium tumefaciens (strain C58))).